The primary structure comprises 123 residues: MPTIEQLVRKGRQAKPKKSKTLALKGSPLRRGVCTRVYTTTPRKPNSALRKVARVRLSSGIEVTAYIPGEGHNLQEHSIVLVRGGRVKDLPGVRYHIVRGALDTQGVKDRKQGRSLYGAKKAK.

The interval 1–21 (MPTIEQLVRKGRQAKPKKSKT) is disordered. Positions 9–20 (RKGRQAKPKKSK) are enriched in basic residues. Residue Asp-89 is modified to 3-methylthioaspartic acid.

It belongs to the universal ribosomal protein uS12 family. As to quaternary structure, part of the 30S ribosomal subunit. Contacts proteins S8 and S17. May interact with IF1 in the 30S initiation complex.

Functionally, with S4 and S5 plays an important role in translational accuracy. Interacts with and stabilizes bases of the 16S rRNA that are involved in tRNA selection in the A site and with the mRNA backbone. Located at the interface of the 30S and 50S subunits, it traverses the body of the 30S subunit contacting proteins on the other side and probably holding the rRNA structure together. The combined cluster of proteins S8, S12 and S17 appears to hold together the shoulder and platform of the 30S subunit. The chain is Small ribosomal subunit protein uS12 from Bifidobacterium longum subsp. infantis (strain ATCC 15697 / DSM 20088 / JCM 1222 / NCTC 11817 / S12).